Here is a 150-residue protein sequence, read N- to C-terminus: Phosphoribosyl-AMP cyclohydrolase (150 aa).

Residue Asp-93 participates in Mg(2+) binding. A Zn(2+)-binding site is contributed by Cys-94. Asp-95 and Asp-97 together coordinate Mg(2+). Cys-112 and Cys-119 together coordinate Zn(2+).

It belongs to the PRA-CH family. As to quaternary structure, homodimer. Requires Mg(2+) as cofactor. Zn(2+) serves as cofactor.

The protein localises to the cytoplasm. The catalysed reaction is 1-(5-phospho-beta-D-ribosyl)-5'-AMP + H2O = 1-(5-phospho-beta-D-ribosyl)-5-[(5-phospho-beta-D-ribosylamino)methylideneamino]imidazole-4-carboxamide. The protein operates within amino-acid biosynthesis; L-histidine biosynthesis; L-histidine from 5-phospho-alpha-D-ribose 1-diphosphate: step 3/9. Functionally, catalyzes the hydrolysis of the adenine ring of phosphoribosyl-AMP. This is Phosphoribosyl-AMP cyclohydrolase from Rhizobium etli (strain ATCC 51251 / DSM 11541 / JCM 21823 / NBRC 15573 / CFN 42).